Consider the following 269-residue polypeptide: Probable cysteine protease avirulence protein AvrPpiC2 (269 aa).

The interval 1 to 39 (MTIVSGHIGKHPSLTTVQAGSSASVENQMPDPAQFSDGR) is disordered. Positions 13 to 27 (SLTTVQAGSSASVEN) are enriched in polar residues. Residues Cys72, His213, and Asp230 contribute to the active site.

It belongs to the peptidase C58 family.

In terms of biological role, potential cysteine protease. Avirulence protein, which may be essential during infection of plant cells from Pea and some Arabidopsis thaliana cultivars. May act by affecting the plant defense system. In plants lacking appropriate resistance (R) gene, it probably impairs the plant defense system and leads to the bacteria multiplication. In contrast, in plants containing the appropriate R protein, it is unable to induce disease symptoms, explaining its avirulence name. The sequence is that of Probable cysteine protease avirulence protein AvrPpiC2 (avrPpiC2) from Pseudomonas syringae pv. pisi.